An 86-amino-acid chain; its full sequence is Venom metalloproteinase (86 aa).

Asp7 contacts Ca(2+). Residue His67 participates in Zn(2+) binding. Glu68 is an active-site residue. 2 residues coordinate Zn(2+): His71 and His77.

The protein belongs to the venom metalloproteinase (M12B) family. Zn(2+) is required as a cofactor. Expressed by the venom gland.

It is found in the secreted. The sequence is that of Venom metalloproteinase from Tityus serrulatus (Brazilian scorpion).